A 358-amino-acid chain; its full sequence is Starch-binding domain-containing protein 1 (358 aa).

Residues Met1 to Ser6 lie on the Extracellular side of the membrane. The helical transmembrane segment at Ala7 to Leu23 threads the bilayer. The Cytoplasmic portion of the chain corresponds to Arg24–His358. Residues Thr30–Ala42 show a composition bias toward basic and acidic residues. 2 disordered regions span residues Thr30 to Val70 and Ser104 to Gly151. The segment covering Pro50–Gly66 has biased composition (low complexity). A Phosphoserine modification is found at Ser65. Residues Glu106–Val115 are compositionally biased toward basic and acidic residues. Residue Ser117 is modified to Phosphoserine. Residues Pro126–Val140 show a composition bias toward polar residues. A phosphoserine mark is found at Ser148, Ser175, Ser188, and Ser194. Positions His200–Val206 match the LIR motif. Ser210, Ser211, and Ser220 each carry phosphoserine. The CBM20 domain maps to Pro258–Ile357.

As to quaternary structure, interacts with the ATG8 family proteins GABARAP and GABARAPL1. Interacts with several glycogen-associated proteins, such as GYS2 (liver glycogen synthase), GDE (glycogen debranching enzyme), GBE1 (glycogen branching enzyme 1) and EPM2A (Laforin). Ubiquitinated, which leads to proteasomal degradation. Expressed at high level in skeletal and cardiac muscles. Moderately expressed in liver and placenta. No expression is found in pancreas, kidney or lung. Present in skeletal muscle, heart and placenta (at protein level).

Its subcellular location is the preautophagosomal structure membrane. It is found in the endoplasmic reticulum membrane. It localises to the cell membrane. The protein resides in the sarcolemma. The protein localises to the T-tubule. Its function is as follows. Acts as a cargo receptor for glycogen. Delivers its cargo to an autophagic pathway called glycophagy, resulting in the transport of glycogen to lysosomes. This Homo sapiens (Human) protein is Starch-binding domain-containing protein 1.